Reading from the N-terminus, the 136-residue chain is Histone H3-like 3 (136 aa).

A compositionally biased stretch (basic residues) spans Met1–Lys15. Residues Met1–Tyr42 are disordered. Residues Lys5 and Lys10 each carry the N6,N6,N6-trimethyllysine; alternate modification. Lys5 and Lys10 each carry N6,N6-dimethyllysine; alternate. N6-methyllysine; alternate is present on residues Lys5 and Lys10. The residue at position 10 (Lys10) is an N6-acetyllysine; alternate. At Ser11 the chain carries Phosphoserine. Position 15 is an N6-acetyllysine (Lys15). Residues Lys24 and Lys28 each carry the N6-methyllysine; alternate modification. An N6-acetyllysine; alternate modification is found at Lys24. Lys28 is modified (N6,N6,N6-trimethyllysine; alternate). Lys28 is subject to N6,N6-dimethyllysine; alternate. Ser29 is subject to Phosphoserine. N6,N6,N6-trimethyllysine; alternate is present on Lys37. Lys37 carries the post-translational modification N6,N6-dimethyllysine; alternate. At Lys37 the chain carries N6-methyllysine; alternate.

The protein belongs to the histone H3 family. The nucleosome is a histone octamer containing two molecules each of H2A, H2B, H3 and H4 assembled in one H3-H4 heterotetramer and two H2A-H2B heterodimers. The octamer wraps approximately 147 bp of DNA. In terms of tissue distribution, expressed in roots, seedlings, leaves and open flowers.

The protein resides in the nucleus. It is found in the chromosome. Core component of nucleosome. Nucleosomes wrap and compact DNA into chromatin, limiting DNA accessibility to the cellular machineries which require DNA as a template. Histones thereby play a central role in transcription regulation, DNA repair, DNA replication and chromosomal stability. DNA accessibility is regulated via a complex set of post-translational modifications of histones, also called histone code, and nucleosome remodeling. This Arabidopsis thaliana (Mouse-ear cress) protein is Histone H3-like 3.